The following is a 273-amino-acid chain: 2,3,4,5-tetrahydropyridine-2,6-dicarboxylate N-succinyltransferase (273 aa).

Positions 106 and 143 each coordinate substrate.

Belongs to the transferase hexapeptide repeat family. Homotrimer.

The protein localises to the cytoplasm. The catalysed reaction is (S)-2,3,4,5-tetrahydrodipicolinate + succinyl-CoA + H2O = (S)-2-succinylamino-6-oxoheptanedioate + CoA. It functions in the pathway amino-acid biosynthesis; L-lysine biosynthesis via DAP pathway; LL-2,6-diaminopimelate from (S)-tetrahydrodipicolinate (succinylase route): step 1/3. This Wolbachia pipientis wMel protein is 2,3,4,5-tetrahydropyridine-2,6-dicarboxylate N-succinyltransferase.